The primary structure comprises 383 residues: MYCLGLMSGTSVDSIDAALVKITGENVDLEIELLSGINHYYPEKLRQTILEVADGKPLSMERLAELDEEIALCFVEAVNKIKQKYSTVALIGSHGQTIYHRPPFKEKLGYTLQLGRGEIIANLTGIPTVNNFRAADIAVGGQGAPLVSKIDACLLSHPQHHRCVQNLGGIGNVTYLPPKEEKNWENRIIGWDTGPGNILIDLAVNRLTHGEKTYDNNGEWAAQGNPHSQLVEQWLKQGFFQQTPPKSTGRELFGEAYLEQCWQDAQVYNLSETDFLATLTELTAASIAHSYQQFLKDPIDEILLCGGGSHNLYLKERIQSHFPSTTTVKTTDEVGMNSDFKEAIAFAILAYWRYVSKIPGNLPQVTGAKQARLLGDIHLPLNS.

Residue 9–16 (GTSVDSID) coordinates ATP.

Belongs to the anhydro-N-acetylmuramic acid kinase family.

It carries out the reaction 1,6-anhydro-N-acetyl-beta-muramate + ATP + H2O = N-acetyl-D-muramate 6-phosphate + ADP + H(+). It participates in amino-sugar metabolism; 1,6-anhydro-N-acetylmuramate degradation. Its pathway is cell wall biogenesis; peptidoglycan recycling. Its function is as follows. Catalyzes the specific phosphorylation of 1,6-anhydro-N-acetylmuramic acid (anhMurNAc) with the simultaneous cleavage of the 1,6-anhydro ring, generating MurNAc-6-P. Is required for the utilization of anhMurNAc either imported from the medium or derived from its own cell wall murein, and thus plays a role in cell wall recycling. In Crocosphaera subtropica (strain ATCC 51142 / BH68) (Cyanothece sp. (strain ATCC 51142)), this protein is Anhydro-N-acetylmuramic acid kinase.